A 193-amino-acid polypeptide reads, in one-letter code: dCTP deaminase (193 aa).

DCTP is bound by residues 110 to 115 (RSSLAR), aspartate 128, 136 to 138 (VLE), tyrosine 171, lysine 178, and glutamine 182. The Proton donor/acceptor role is filled by glutamate 138. The segment at 169–193 (RPYNRREDAKYRNQQGAVASRIDKD) is disordered.

Belongs to the dCTP deaminase family. As to quaternary structure, homotrimer.

The catalysed reaction is dCTP + H2O + H(+) = dUTP + NH4(+). It functions in the pathway pyrimidine metabolism; dUMP biosynthesis; dUMP from dCTP (dUTP route): step 1/2. Functionally, catalyzes the deamination of dCTP to dUTP. This chain is dCTP deaminase, found in Escherichia coli O1:K1 / APEC.